The primary structure comprises 222 residues: Inositol diphosphatase DSP1 (222 aa).

Over residues Met-1 to Asp-14 the composition is skewed to polar residues. The interval Met-1–Pro-41 is disordered. One can recognise a Tyrosine-protein phosphatase domain in the interval Asn-68–Cys-222. The segment at Phe-124 to Ile-136 is WPD loop important for active site topology. The 1D-myo-inositol hexakisphosphate site is built by Asn-135, Ile-136, and Arg-140. Catalysis depends on Cys-160, which acts as the Phosphocysteine intermediate.

This sequence belongs to the protein-tyrosine phosphatase family. Atypical dual-specificity phosphatase Siw14-like subfamily.

Its subcellular location is the nucleus. It localises to the cytoplasm. It catalyses the reaction 5-diphospho-1D-myo-inositol 1,2,3,4,6-pentakisphosphate + H2O = 1D-myo-inositol hexakisphosphate + phosphate + H(+). It carries out the reaction 1,5-bis(diphospho)-1D-myo-inositol 2,3,4,6-tetrakisphosphate + H2O = 1-diphospho-1D-myo-inositol 2,3,4,5,6-pentakisphosphate + phosphate + 2 H(+). The enzyme catalyses 3,5-bis(diphospho)-1D-myo-inositol 1,2,4,6-tetrakisphosphate + H2O = 3-diphospho-1D-myo-inositol 1,2,4,5,6-pentakisphosphate + phosphate + 2 H(+). The catalysed reaction is 6-diphospho-1D-myo-inositol pentakisphosphate + H2O = 1D-myo-inositol hexakisphosphate + phosphate + H(+). Functionally, cleaves the beta-phosphate at the 5-position of soluble inositol pyrophosphates. Has highest activity on 5-diphosphoinositol 1,2,3,4,6-pentakisphosphate (5-InsP(7)). Possesses phosphotyrosine phosphatase activity in vitro. May contribute to regulation of drought stress responses. This chain is Inositol diphosphatase DSP1, found in Oryza sativa subsp. japonica (Rice).